The chain runs to 341 residues: Anthranilate phosphoribosyltransferase (341 aa).

Residues glycine 80, glycine 83–aspartate 84, threonine 88, asparagine 90–threonine 93, lysine 108–serine 116, and serine 120 contribute to the 5-phospho-alpha-D-ribose 1-diphosphate site. Residue glycine 80 participates in anthranilate binding. Serine 92 is a binding site for Mg(2+). Asparagine 111 is a binding site for anthranilate. Arginine 166 serves as a coordination point for anthranilate. 2 residues coordinate Mg(2+): aspartate 225 and glutamate 226.

It belongs to the anthranilate phosphoribosyltransferase family. In terms of assembly, homodimer. Mg(2+) serves as cofactor.

It carries out the reaction N-(5-phospho-beta-D-ribosyl)anthranilate + diphosphate = 5-phospho-alpha-D-ribose 1-diphosphate + anthranilate. Its pathway is amino-acid biosynthesis; L-tryptophan biosynthesis; L-tryptophan from chorismate: step 2/5. Catalyzes the transfer of the phosphoribosyl group of 5-phosphorylribose-1-pyrophosphate (PRPP) to anthranilate to yield N-(5'-phosphoribosyl)-anthranilate (PRA). The polypeptide is Anthranilate phosphoribosyltransferase (Roseiflexus sp. (strain RS-1)).